The sequence spans 1490 residues: DNA-directed RNA polymerase subunit beta' (1490 aa).

Zn(2+) contacts are provided by cysteine 67, cysteine 69, cysteine 82, and cysteine 85. The Mg(2+) site is built by aspartate 499, aspartate 501, and aspartate 503. Zn(2+) contacts are provided by cysteine 868, cysteine 944, cysteine 951, and cysteine 954.

Belongs to the RNA polymerase beta' chain family. In terms of assembly, the RNAP catalytic core consists of 2 alpha, 1 beta, 1 beta' and 1 omega subunit. When a sigma factor is associated with the core the holoenzyme is formed, which can initiate transcription. Mg(2+) is required as a cofactor. Zn(2+) serves as cofactor.

The catalysed reaction is RNA(n) + a ribonucleoside 5'-triphosphate = RNA(n+1) + diphosphate. Its function is as follows. DNA-dependent RNA polymerase catalyzes the transcription of DNA into RNA using the four ribonucleoside triphosphates as substrates. In Chlorobaculum tepidum (strain ATCC 49652 / DSM 12025 / NBRC 103806 / TLS) (Chlorobium tepidum), this protein is DNA-directed RNA polymerase subunit beta'.